Consider the following 226-residue polypeptide: MSGSLPLRLVLASASPARRKTLQAAGIEPDVLVSGVDESLVASDRADELCLELARLKAQAVLTRLRPAQDQRTLVIGCDSVLEFDGQIFGKPADSADAIHRWERMRGRSGVLHSGHCLVDVTAGRRAEAVASTTVHFAAVSDDEIATYVATGEPLVVAGAFTIDGLGGPFVERIEGDPGTVVGLSLPLLRRLLAELNLPITGLWSRGTSTHPTPGTSATPKPNPGA.

Residue D79 is the Proton acceptor of the active site. The tract at residues 204–226 (WSRGTSTHPTPGTSATPKPNPGA) is disordered. A compositionally biased stretch (polar residues) spans 206–220 (RGTSTHPTPGTSATP).

Belongs to the Maf family. Requires a divalent metal cation as cofactor.

It is found in the cytoplasm. It catalyses the reaction a ribonucleoside 5'-triphosphate + H2O = a ribonucleoside 5'-phosphate + diphosphate + H(+). The catalysed reaction is a 2'-deoxyribonucleoside 5'-triphosphate + H2O = a 2'-deoxyribonucleoside 5'-phosphate + diphosphate + H(+). Nucleoside triphosphate pyrophosphatase. May have a dual role in cell division arrest and in preventing the incorporation of modified nucleotides into cellular nucleic acids. The sequence is that of Nucleoside triphosphate pyrophosphatase from Salinispora tropica (strain ATCC BAA-916 / DSM 44818 / JCM 13857 / NBRC 105044 / CNB-440).